The chain runs to 100 residues: Small ribosomal subunit protein bS20 (100 aa).

Positions 79–100 (AAHQKSRLSAAVKQAIEPAPST) are disordered.

Belongs to the bacterial ribosomal protein bS20 family.

Binds directly to 16S ribosomal RNA. The sequence is that of Small ribosomal subunit protein bS20 from Prochlorococcus marinus (strain MIT 9303).